The chain runs to 910 residues: Leucine--tRNA ligase (910 aa).

The short motif at 42-52 (PYPSGKLHMGH) is the 'HIGH' region element. The 'KMSKS' region motif lies at 658 to 662 (TMSKS). Lys-661 contacts ATP.

Belongs to the class-I aminoacyl-tRNA synthetase family.

Its subcellular location is the cytoplasm. It catalyses the reaction tRNA(Leu) + L-leucine + ATP = L-leucyl-tRNA(Leu) + AMP + diphosphate. The chain is Leucine--tRNA ligase from Acidovorax sp. (strain JS42).